The chain runs to 547 residues: CTP synthase (547 aa).

Residues 1–265 form an amidoligase domain region; it reads MARYVFITGG…DQAVLDAFGI (265 aa). Serine 13 lines the CTP pocket. Residue serine 13 participates in UTP binding. Residues 14–19 and aspartate 71 each bind ATP; that span reads SLGKGL. Positions 71 and 139 each coordinate Mg(2+). CTP-binding positions include 146 to 148, 186 to 191, and lysine 222; these read DIE and KTKPTQ. UTP-binding positions include 186–191 and lysine 222; that span reads KTKPTQ. In terms of domain architecture, Glutamine amidotransferase type-1 spans 291–546; that stretch reads RVAIVGKYTQ…IRAAVEVSRL (256 aa). An L-glutamine-binding site is contributed by glycine 353. Cysteine 380 functions as the Nucleophile; for glutamine hydrolysis in the catalytic mechanism. Residues 381–384, glutamate 404, and arginine 474 contribute to the L-glutamine site; that span reads LGMQ. Residues histidine 519 and glutamate 521 contribute to the active site.

This sequence belongs to the CTP synthase family. In terms of assembly, homotetramer.

The enzyme catalyses UTP + L-glutamine + ATP + H2O = CTP + L-glutamate + ADP + phosphate + 2 H(+). It carries out the reaction L-glutamine + H2O = L-glutamate + NH4(+). It catalyses the reaction UTP + NH4(+) + ATP = CTP + ADP + phosphate + 2 H(+). It participates in pyrimidine metabolism; CTP biosynthesis via de novo pathway; CTP from UDP: step 2/2. Its activity is regulated as follows. Allosterically activated by GTP, when glutamine is the substrate; GTP has no effect on the reaction when ammonia is the substrate. The allosteric effector GTP functions by stabilizing the protein conformation that binds the tetrahedral intermediate(s) formed during glutamine hydrolysis. Inhibited by the product CTP, via allosteric rather than competitive inhibition. Catalyzes the ATP-dependent amination of UTP to CTP with either L-glutamine or ammonia as the source of nitrogen. Regulates intracellular CTP levels through interactions with the four ribonucleotide triphosphates. The chain is CTP synthase from Cereibacter sphaeroides (strain ATCC 17025 / ATH 2.4.3) (Rhodobacter sphaeroides).